A 430-amino-acid polypeptide reads, in one-letter code: Histidine--tRNA ligase (430 aa).

Belongs to the class-II aminoacyl-tRNA synthetase family. Homodimer.

It is found in the cytoplasm. It catalyses the reaction tRNA(His) + L-histidine + ATP = L-histidyl-tRNA(His) + AMP + diphosphate + H(+). This Chlorobium luteolum (strain DSM 273 / BCRC 81028 / 2530) (Pelodictyon luteolum) protein is Histidine--tRNA ligase.